The chain runs to 373 residues: UDP-N-acetylglucosamine--N-acetylmuramyl-(pentapeptide) pyrophosphoryl-undecaprenol N-acetylglucosamine transferase (373 aa).

UDP-N-acetyl-alpha-D-glucosamine is bound by residues 14–16 (TAG), Asn-128, Arg-165, Ser-199, and Gln-295.

It belongs to the glycosyltransferase 28 family. MurG subfamily.

The protein resides in the cell membrane. It carries out the reaction di-trans,octa-cis-undecaprenyl diphospho-N-acetyl-alpha-D-muramoyl-L-alanyl-D-glutamyl-meso-2,6-diaminopimeloyl-D-alanyl-D-alanine + UDP-N-acetyl-alpha-D-glucosamine = di-trans,octa-cis-undecaprenyl diphospho-[N-acetyl-alpha-D-glucosaminyl-(1-&gt;4)]-N-acetyl-alpha-D-muramoyl-L-alanyl-D-glutamyl-meso-2,6-diaminopimeloyl-D-alanyl-D-alanine + UDP + H(+). Its pathway is cell wall biogenesis; peptidoglycan biosynthesis. In terms of biological role, cell wall formation. Catalyzes the transfer of a GlcNAc subunit on undecaprenyl-pyrophosphoryl-MurNAc-pentapeptide (lipid intermediate I) to form undecaprenyl-pyrophosphoryl-MurNAc-(pentapeptide)GlcNAc (lipid intermediate II). The polypeptide is UDP-N-acetylglucosamine--N-acetylmuramyl-(pentapeptide) pyrophosphoryl-undecaprenol N-acetylglucosamine transferase (Mycobacterium sp. (strain KMS)).